The primary structure comprises 326 residues: Nitrogen metabolite regulation-like protein bik4 (326 aa).

NADP(+) contacts are provided by residues 13–18 (GATGEV) and 161–164 (FASN).

It belongs to the NmrA-type oxidoreductase family.

Nitrogen metabolite regulation-like protein involved in the regulation of the gene cluster that mediates the biosynthesis of bikaverin, a red pigment also considered as a mycotoxin. In Gibberella fujikuroi (strain CBS 195.34 / IMI 58289 / NRRL A-6831) (Bakanae and foot rot disease fungus), this protein is Nitrogen metabolite regulation-like protein bik4.